The following is a 309-amino-acid chain: Phosphoserine phosphatase (309 aa).

Asp-97 acts as the Nucleophile in catalysis. Mg(2+)-binding residues include Asp-97 and Asp-99. The active-site Proton donor is Asp-99. Substrate is bound by residues Glu-106, Arg-142, 186-187 (SG), and Lys-232. Residue Asp-255 participates in Mg(2+) binding. Residue Asn-258 coordinates substrate.

The protein belongs to the HAD-like hydrolase superfamily. SerB family. Mg(2+) serves as cofactor.

It catalyses the reaction O-phospho-L-serine + H2O = L-serine + phosphate. The catalysed reaction is O-phospho-D-serine + H2O = D-serine + phosphate. The protein operates within amino-acid biosynthesis; L-serine biosynthesis; L-serine from 3-phospho-D-glycerate: step 3/3. This is Phosphoserine phosphatase (SER2) from Saccharomyces cerevisiae (strain ATCC 204508 / S288c) (Baker's yeast).